A 647-amino-acid chain; its full sequence is MGKIHELDSVLADQIAAGEVIERPASIVKELAENSLDANSHRIDIIVEEAGLKSVRVIDDGQGIEADDVARAFLRHATSKIADKGDLFKVTTMGFRGEALPSIASVADVLLTTATGGAAGSQIHIKGGEILAHGQASARPGTDILVSDLFYNTPARLKYLKSPHTELARIVDIVNRLALANPTVAFSLTHDGKEVFRSAGNGNLKQVVAAIYGVQAGRKMVEVKGEDPNFKVSGLVSLPELTRAGRQYMTIMINHRYVRNFQLTKALVAGYRSKLMVGRYPLAVINIDLDPVLVDVNVHPAKREVRLSMEPQLVDLLERVVSQAIDQQNLIPDVGDRADELLTREQTVHAPRSAAPRVSERASDEPPAWQPSPTSGEPVIISRRSELASPAVQAFDRRYQNEEVATPFGAQADAKVSQAQPAVEQVSLDIDDRGDVASERFPDLTYLGQLHGTYLLAQASDGLYIVDQHAAQERINYEYYREEIGKVSADQQNFLTPLVLNYSLADALKIQQHQAVLAACGLKLEPFGQNSFMLASHPTWFVAGQEEDTAREMIDWVLASGKLSVKDFRAKAAIMMSCKRAIKANHRLDERQAKALLARLPQCENPFNCPHGRPVTIHFTTTDLEKLFKRIQESHQPFADDFDDHED.

The segment at 346–378 (QTVHAPRSAAPRVSERASDEPPAWQPSPTSGEP) is disordered.

The protein belongs to the DNA mismatch repair MutL/HexB family.

Its function is as follows. This protein is involved in the repair of mismatches in DNA. It is required for dam-dependent methyl-directed DNA mismatch repair. May act as a 'molecular matchmaker', a protein that promotes the formation of a stable complex between two or more DNA-binding proteins in an ATP-dependent manner without itself being part of a final effector complex. The sequence is that of DNA mismatch repair protein MutL from Limosilactobacillus fermentum (strain NBRC 3956 / LMG 18251) (Lactobacillus fermentum).